The primary structure comprises 153 residues: MMTLTTDKKTMNITEIQSLLPHRYPFLLIDRVTDYEEGKYLIGLKNVSVNEPQFTGHFPQLPVFPGVLILEAMAQATGLLAFKTFGAPKENELYYFASIDEAKFRKPVTPGDQLMVEVEFLKERRGIALFNGVAKVDGDVVCSAQLKCARREF.

His57 is a catalytic residue.

This sequence belongs to the thioester dehydratase family. FabZ subfamily.

The protein localises to the cytoplasm. It carries out the reaction a (3R)-hydroxyacyl-[ACP] = a (2E)-enoyl-[ACP] + H2O. Involved in unsaturated fatty acids biosynthesis. Catalyzes the dehydration of short chain beta-hydroxyacyl-ACPs and long chain saturated and unsaturated beta-hydroxyacyl-ACPs. The sequence is that of 3-hydroxyacyl-[acyl-carrier-protein] dehydratase FabZ from Vibrio cholerae serotype O1 (strain ATCC 39315 / El Tor Inaba N16961).